The following is a 190-amino-acid chain: Elongation factor P-like protein (190 aa).

It belongs to the elongation factor P family.

The sequence is that of Elongation factor P-like protein from Yersinia pestis bv. Antiqua (strain Antiqua).